The primary structure comprises 504 residues: 5-epiaristolochene 1,3-dihydroxylase (504 aa).

The helical transmembrane segment at 2 to 22 threads the bilayer; the sequence is QFFSLVSIFLFLSFLFLLRKW. Residue Cys-442 coordinates heme.

Belongs to the cytochrome P450 family. Heme is required as a cofactor.

It localises to the membrane. It carries out the reaction (+)-5-epi-aristolochene + 2 reduced [NADPH--hemoprotein reductase] + 2 O2 = capsidiol + 2 oxidized [NADPH--hemoprotein reductase] + 2 H2O + 2 H(+). With respect to regulation, inhibited by ancymidol and ketoconazole. Its function is as follows. Involved in the biosynthesis of capsidiol. Catalyzes the successive and independent hydroxylations at the C1 and C3 positions of 5-epiaristolochene. The second hydroxylation step is 8-fold more efficient than the first hydroxylation reaction. Capable of utilizing premnaspirodiene as a substrate. This Nicotiana tabacum (Common tobacco) protein is 5-epiaristolochene 1,3-dihydroxylase (CYP71D20).